Consider the following 427-residue polypeptide: Gamma-glutamyl phosphate reductase (427 aa).

It belongs to the gamma-glutamyl phosphate reductase family.

The protein resides in the cytoplasm. It carries out the reaction L-glutamate 5-semialdehyde + phosphate + NADP(+) = L-glutamyl 5-phosphate + NADPH + H(+). The protein operates within amino-acid biosynthesis; L-proline biosynthesis; L-glutamate 5-semialdehyde from L-glutamate: step 2/2. Its function is as follows. Catalyzes the NADPH-dependent reduction of L-glutamate 5-phosphate into L-glutamate 5-semialdehyde and phosphate. The product spontaneously undergoes cyclization to form 1-pyrroline-5-carboxylate. This Gluconobacter oxydans (strain 621H) (Gluconobacter suboxydans) protein is Gamma-glutamyl phosphate reductase.